We begin with the raw amino-acid sequence, 397 residues long: Acid extracellular protease (397 aa).

Residues 1–17 (MQFSLATLTTLLAFVAA) form the signal peptide. One can recognise a Peptidase A1 domain in the interval 61–378 (YQVQISLGGQ…DLERDEVSIA (318 aa)). Asp-77 is a catalytic residue. A glycan (N-linked (GlcNAc...) asparagine) is linked at Asn-88. Cys-93 and Cys-100 form a disulfide bridge. Asp-264 is a catalytic residue. The cysteines at positions 303 and 343 are disulfide-linked. 2 N-linked (GlcNAc...) asparagine glycosylation sites follow: Asn-310 and Asn-314.

It belongs to the peptidase A1 family.

It is found in the secreted. In Yarrowia lipolytica (strain CLIB 122 / E 150) (Yeast), this protein is Acid extracellular protease (AXP1).